We begin with the raw amino-acid sequence, 134 residues long: uncharacterized protein (134 aa).

The signal sequence occupies residues 1–26 (MRLYKAMALCLPLVVICTSEVSQSTA). Positions 77–98 (GEKNEEVAGPVDGEGSEEEAFD) are disordered.

This is an uncharacterized protein from Encephalitozoon cuniculi (strain GB-M1) (Microsporidian parasite).